The primary structure comprises 159 residues: Protransforming growth factor alpha (159 aa).

Positions 1-23 are cleaved as a signal peptide; the sequence is MVPATGQLALLALGILLAVCQAL. Residues 24-38 constitute a propeptide, removed in mature form; the sequence is ENSTSPLSDSPVAAA. The Extracellular segment spans residues 24 to 97; it reads ENSTSPLSDS…AVVAASQKKQ (74 aa). Asn-25 carries an N-linked (GlcNAc...) asparagine glycan. Residues 44 to 83 form the EGF-like domain; the sequence is NKCPDSHTQYCFHGTCRFLVQEEKPACVCHSGYVGVRCEH. 3 cysteine pairs are disulfide-bonded: Cys-46/Cys-59, Cys-54/Cys-70, and Cys-72/Cys-81. Residues 89–159 constitute a propeptide, removed in mature form; it reads VVAASQKKQA…TACCHSETVV (71 aa). The chain crosses the membrane as a helical span at residues 98–123; it reads AITALVVVSIVALAVLIITCVLIHCC. Residues 124-159 lie on the Cytoplasmic side of the membrane; it reads QLRKHCEWCRALVCRHEKPSALLKGRTACCHSETVV. Residues Cys-152 and Cys-153 are each lipidated (S-palmitoyl cysteine).

In terms of assembly, interacts with the PDZ domains of SDCBP and SNTA1. The interaction with SDCBP, is required for the targeting to the cell surface. In the endoplasmic reticulum, in its immature form (i.e. with a prosegment and lacking full N-glycosylation), interacts with CNIH. In the Golgi apparatus, may form a complex with CNIH and GORASP2. Interacts (via cytoplasmic C-terminal domain) with NKD2. Interacts with MAGI3.

The protein localises to the secreted. The protein resides in the extracellular space. Its subcellular location is the cell membrane. In terms of biological role, TGF alpha is a mitogenic polypeptide that is able to bind to the EGF receptor/EGFR and to act synergistically with TGF beta to promote anchorage-independent cell proliferation in soft agar. The protein is Protransforming growth factor alpha (Tgfa) of Mus musculus (Mouse).